Reading from the N-terminus, the 423-residue chain is 5-hydroxytryptamine receptor 1A (423 aa).

The tract at residues 1–20 (MEGLSPGQGNNTTSSEGPFG) is disordered. Topologically, residues 1–38 (MEGLSPGQGNNTTSSEGPFGTRGNATGISDVTFSYQVI) are extracellular. Positions 7 to 16 (GQGNNTTSSE) are enriched in polar residues. Asn10, Asn11, and Asn24 each carry an N-linked (GlcNAc...) asparagine glycan. Residues 39-59 (TSLLLGTLIFCAVLGNACVVA) traverse the membrane as a helical segment. Over 60–73 (AIALERSLQNVANY) the chain is Cytoplasmic. The helical transmembrane segment at 74-98 (LIGSLAVTDLMVSVLVLPMAALYQV) threads the bilayer. At 99–107 (LNKWTLGQV) the chain is on the extracellular side. Residues 108–132 (TCDLFIALDVLCCTSSILHLCAIAL) traverse the membrane as a helical segment. An intrachain disulfide couples Cys109 to Cys187. The serotonin site is built by Asp116 and Cys120. The DRY motif; important for ligand-induced conformation changes signature appears at 133–135 (DRY). Residues 133–152 (DRYWAITDPIDYVNKRTPRR) lie on the Cytoplasmic side of the membrane. The helical transmembrane segment at 153–174 (AAALISLTWLIGFLISIPPMLG) threads the bilayer. Topologically, residues 175–193 (WRTPEDRSDPDACTISKDH) are extracellular. The chain crosses the membrane as a helical span at residues 194–216 (GYTIYSTFGAFYIPLLLMLVLYG). Residues 217–346 (RIFRAARFRI…LARERKTVKT (130 aa)) lie on the Cytoplasmic side of the membrane. Residues 235–277 (RKGADARSGVSPAPQPRKSVNGEPGGREWRQGPGSKAGGPLCT) form a disordered region. Lys345, Thr346, and Gly352 together coordinate 1D-myo-inositol 4-phosphate. A helical transmembrane segment spans residues 347-370 (LGIIMGTFILCWLPFFIVALVLPF). At 371-378 (CESSCHMP) the chain is on the extracellular side. A helical transmembrane segment spans residues 379-403 (TLLGAIINWLGYSNSLLNPVIYAYF). The NPxxY motif; important for ligand-induced conformation changes and signaling motif lies at 396-400 (NPVIY). Positions 403, 404, and 405 each coordinate 1D-myo-inositol 4-phosphate. The Cytoplasmic segment spans residues 404 to 423 (NKDFQNAFKKIVRCKFCRRR).

Belongs to the G-protein coupled receptor 1 family. 5-hydroxytryptamine receptor subfamily. HTR1A sub-subfamily. Heterodimer; heterodimerizes with GPER1. Interacts with YIF1B. Interacts with GPR39 and GALR1.

The protein localises to the cell membrane. The protein resides in the cell projection. It localises to the dendrite. Its activity is regulated as follows. G-protein coupled receptor activity is regulated by lipids: phosphatidylinositol 4-phosphate increases HTR1A-mediated activity. In terms of biological role, G-protein coupled receptor for 5-hydroxytryptamine (serotonin). Also functions as a receptor for various drugs and psychoactive substances. Ligand binding causes a conformation change that triggers signaling via guanine nucleotide-binding proteins (G proteins) and modulates the activity of downstream effectors, such as adenylate cyclase. HTR1A is coupled to G(i)/G(o) G alpha proteins and mediates inhibitory neurotransmission: signaling inhibits adenylate cyclase activity and activates a phosphatidylinositol-calcium second messenger system that regulates the release of Ca(2+) ions from intracellular stores. Beta-arrestin family members regulate signaling by mediating both receptor desensitization and resensitization processes. The chain is 5-hydroxytryptamine receptor 1A (HTR1A) from Vulpes vulpes (Red fox).